We begin with the raw amino-acid sequence, 148 residues long: Ubiquitin-like protein 4A (148 aa).

The 76-residue stretch at 1–76 folds into the Ubiquitin-like domain; sequence MQLTVKALKG…LNLMVKEQVA (76 aa).

As to quaternary structure, component of the bag6/bat3 complex.

The protein localises to the cytoplasm. It localises to the cytosol. It is found in the nucleus. Functionally, as part of a cytosolic protein quality control complex, the bag6/bat3 complex, maintains misfolded and hydrophobic patches-containing proteins in a soluble state and participates in their proper delivery to the endoplasmic reticulum or alternatively can promote their sorting to the proteasome where they undergo degradation. The bag6/bat3 complex is involved in the post-translational delivery of tail-anchored/type II transmembrane proteins to the endoplasmic reticulum membrane. Similarly, the bag6/bat3 complex also functions as a sorting platform for proteins of the secretory pathway that are mislocalized to the cytosol either delivering them to the proteasome for degradation or to the endoplasmic reticulum. The bag6/bat3 complex also plays a role in the endoplasmic reticulum-associated degradation (ERAD), a quality control mechanism that eliminates unwanted proteins of the endoplasmic reticulum through their retrotranslocation to the cytosol and their targeting to the proteasome. It maintains these retrotranslocated proteins in an unfolded yet soluble state condition in the cytosol to ensure their proper delivery to the proteasome. The sequence is that of Ubiquitin-like protein 4A (ubl4a) from Xenopus tropicalis (Western clawed frog).